Consider the following 252-residue polypeptide: Thiamine thiazole synthase (252 aa).

Residues serine 35, 54-55 (EK), glycine 62, valine 126, and 152-154 (HVD) each bind NAD(+). Fe cation is bound by residues aspartate 154 and histidine 169. Methionine 217 is an NAD(+) binding site. Glycine is bound at residue arginine 227.

This sequence belongs to the THI4 family. As to quaternary structure, homooctamer; tetramer of dimers. Fe(2+) is required as a cofactor.

The enzyme catalyses hydrogen sulfide + glycine + NAD(+) = ADP-5-ethyl-4-methylthiazole-2-carboxylate + nicotinamide + 3 H2O + H(+). Its pathway is cofactor biosynthesis; thiamine diphosphate biosynthesis. Functionally, involved in the biosynthesis of the thiazole moiety of thiamine. Catalyzes the conversion of NAD and glycine to adenosine diphosphate 5-(2-hydroxyethyl)-4-methylthiazole-2-carboxylate (ADT), an adenylated thiazole intermediate, using free sulfide as a source of sulfur. This Pyrococcus furiosus (strain ATCC 43587 / DSM 3638 / JCM 8422 / Vc1) protein is Thiamine thiazole synthase.